Here is a 336-residue protein sequence, read N- to C-terminus: Protein phosphatase 1 regulatory subunit pprA (336 aa).

Low complexity predominate over residues 1–10 (MSEQNTIINS). Positions 1 to 24 (MSEQNTIINSEEIKENEKIESETE) are disordered. The segment covering 11–21 (EEIKENEKIES) has biased composition (basic and acidic residues). LRR repeat units follow at residues 26–47 (PITYLDLTGQPHTSIGDSYNIP), 49–70 (TLLDLDLTNCKITKIENINHLK), 71–92 (NLKKLCFRQNLIEKIENIDQLK), 93–114 (ELESLDLYDNKLQVIENIKDFQ), 115–136 (SLTYLDLSFNEIRIVENLSIKD), 139–160 (KIKELYLANNKITKIENLQELV), 161–182 (PIKNLELGSNRLREIENLENLV), 183–204 (NIETLWLGRNKITEIKGINHLS), 205–225 (HLRILSLQSNRLTEIGVKGLV), 229–250 (CLEELYLSHNGITDIDGLQSLK), 251–272 (QLRTLDISANKIKTLVGLNELP), and 273–294 (DLDEIWCNDNLVDSMDNIEQQV). In terms of domain architecture, LRRCT spans 306–336 (NPVATHVQYRRMFINMFPQLKQLDATMVKRN).

It belongs to the SDS22 family.

The protein resides in the nucleus. Functionally, regulatory subunit of protein phosphatase 1. The sequence is that of Protein phosphatase 1 regulatory subunit pprA (pprA) from Dictyostelium discoideum (Social amoeba).